Here is a 72-residue protein sequence, read N- to C-terminus: Small, acid-soluble spore protein 1 (72 aa).

The protein belongs to the alpha/beta-type SASP family.

SASP are bound to spore DNA. They are double-stranded DNA-binding proteins that cause DNA to change to an a-like conformation. They protect the DNA backbone from chemical and enzymatic cleavage and are thus involved in dormant spore's high resistance to UV light. The polypeptide is Small, acid-soluble spore protein 1 (Sh-1) (Halobacillus halophilus (strain ATCC 35676 / DSM 2266 / JCM 20832 / KCTC 3685 / LMG 17431 / NBRC 102448 / NCIMB 2269) (Sporosarcina halophila)).